A 206-amino-acid polypeptide reads, in one-letter code: LexA repressor (206 aa).

Residues 28–48 constitute a DNA-binding region (H-T-H motif); the sequence is RAEIATRLGFKSANAAEEHLK. Residues S123 and K160 each act as for autocatalytic cleavage activity in the active site.

The protein belongs to the peptidase S24 family. In terms of assembly, homodimer.

The enzyme catalyses Hydrolysis of Ala-|-Gly bond in repressor LexA.. In terms of biological role, represses a number of genes involved in the response to DNA damage (SOS response), including recA and lexA. In the presence of single-stranded DNA, RecA interacts with LexA causing an autocatalytic cleavage which disrupts the DNA-binding part of LexA, leading to derepression of the SOS regulon and eventually DNA repair. In Shewanella oneidensis (strain ATCC 700550 / JCM 31522 / CIP 106686 / LMG 19005 / NCIMB 14063 / MR-1), this protein is LexA repressor.